Here is a 597-residue protein sequence, read N- to C-terminus: Elongation factor 4 (597 aa).

Positions 2 to 184 constitute a tr-type G domain; that stretch reads KHIRNFSIIA…TIVKCIPAPE (183 aa). GTP contacts are provided by residues 14–19 and 131–134; these read DHGKST and NKID.

It belongs to the TRAFAC class translation factor GTPase superfamily. Classic translation factor GTPase family. LepA subfamily.

It is found in the cell inner membrane. The enzyme catalyses GTP + H2O = GDP + phosphate + H(+). Required for accurate and efficient protein synthesis under certain stress conditions. May act as a fidelity factor of the translation reaction, by catalyzing a one-codon backward translocation of tRNAs on improperly translocated ribosomes. Back-translocation proceeds from a post-translocation (POST) complex to a pre-translocation (PRE) complex, thus giving elongation factor G a second chance to translocate the tRNAs correctly. Binds to ribosomes in a GTP-dependent manner. The sequence is that of Elongation factor 4 from Aliivibrio salmonicida (strain LFI1238) (Vibrio salmonicida (strain LFI1238)).